A 548-amino-acid chain; its full sequence is T-complex protein 1 subunit alpha (548 aa).

It belongs to the TCP-1 chaperonin family. As to quaternary structure, heterooligomeric complex of about 850 to 900 kDa that forms two stacked rings, 12 to 16 nm in diameter.

Its subcellular location is the cytoplasm. In terms of biological role, molecular chaperone; assists the folding of proteins upon ATP hydrolysis. Known to play a role, in vitro, in the folding of actin and tubulin. This Dictyostelium discoideum (Social amoeba) protein is T-complex protein 1 subunit alpha (tcp1).